We begin with the raw amino-acid sequence, 446 residues long: MAQKLFIKTYGCQMNEYDSSRMADLLGESHSVELTDNPDEADILLLNTCSIREKAQEKVFHQLGRWKTLKEKNPNLLIGVGGCVASQEGDAIRDRAPYVDMVFGPQTLHRLPEMVNSVAHQKIPMVDVTFPEIEKFDRLPMPSSEGASAFVSIMEGCSKYCTFCVVPYTRGEEVSRPVDDVIAEIAHLAGQGVREVNLLGQNVNAYRGLTHDGDYMDLAELITYVASVDGIDRIRYTTSHPVEFSDSLIDVYASVPKLVSHLHLPVQSGSDRILNLMKRGHTVAEYTDKLRRLQEIRPDISLSSDFIVGFPGETDADFEETMNLINEIGFDHSFSFVYSARPGTPAANLEDNVSEEAKKQRLAILQQRILQFAQDISRKMVGSTQRILVTGVSKKDPGELQGRTENNRVVNFRSDSHDIIGRFVDVTITAALPNSLRGERVDSLDY.

Residues 3–120 (QKLFIKTYGC…LPEMVNSVAH (118 aa)) enclose the MTTase N-terminal domain. [4Fe-4S] cluster contacts are provided by Cys12, Cys49, Cys83, Cys157, Cys161, and Cys164. The Radical SAM core domain occupies 143-375 (SSEGASAFVS…QQRILQFAQD (233 aa)). Residues 378–442 (RKMVGSTQRI…PNSLRGERVD (65 aa)) form the TRAM domain.

Belongs to the methylthiotransferase family. MiaB subfamily. Monomer. [4Fe-4S] cluster serves as cofactor.

Its subcellular location is the cytoplasm. The catalysed reaction is N(6)-dimethylallyladenosine(37) in tRNA + (sulfur carrier)-SH + AH2 + 2 S-adenosyl-L-methionine = 2-methylsulfanyl-N(6)-dimethylallyladenosine(37) in tRNA + (sulfur carrier)-H + 5'-deoxyadenosine + L-methionine + A + S-adenosyl-L-homocysteine + 2 H(+). In terms of biological role, catalyzes the methylthiolation of N6-(dimethylallyl)adenosine (i(6)A), leading to the formation of 2-methylthio-N6-(dimethylallyl)adenosine (ms(2)i(6)A) at position 37 in tRNAs that read codons beginning with uridine. This chain is tRNA-2-methylthio-N(6)-dimethylallyladenosine synthase, found in Hahella chejuensis (strain KCTC 2396).